Consider the following 580-residue polypeptide: WD repeat-containing protein 46 (580 aa).

Residues 34–108 form a disordered region; that stretch reads SWKEYKKMKQ…QQEKMKVTKD (75 aa). Composition is skewed to basic and acidic residues over residues 64–85 and 98–108; these read TEGR…HDTG and LQQEKMKVTKD. WD repeat units lie at residues 193-234, 235-272, 274-312, 315-354, 357-396, and 399-436; these read AALD…YTYV, YDNL…NSFL, YVDV…HTNG, SLWS…GLDR, RIWD…NHVQ, and RGMH…IGHA.

As to quaternary structure, part of the small subunit (SSU) processome.

The protein resides in the nucleus. It localises to the nucleolus. Scaffold component of the nucleolar structure. Part of the small subunit (SSU) processome, first precursor of the small eukaryotic ribosomal subunit. Required for 18S rRNA processing. Plays a role in negative regulation of detoxification genes by inhibiting protein levels of transcription factor skn-1, leading to down-regulation of skn-1 target genes. This is WD repeat-containing protein 46 from Caenorhabditis elegans.